A 116-amino-acid chain; its full sequence is Large ribosomal subunit protein bL19 (116 aa).

Belongs to the bacterial ribosomal protein bL19 family.

Its function is as follows. This protein is located at the 30S-50S ribosomal subunit interface and may play a role in the structure and function of the aminoacyl-tRNA binding site. The protein is Large ribosomal subunit protein bL19 of Streptomyces avermitilis (strain ATCC 31267 / DSM 46492 / JCM 5070 / NBRC 14893 / NCIMB 12804 / NRRL 8165 / MA-4680).